The following is a 190-amino-acid chain: dCTP deaminase, dUMP-forming (190 aa).

DCTP is bound by residues 101–106, Asp-119, 127–129, Gln-148, Tyr-162, and Gln-174; these read KSSLGR and TLE. The active-site Proton donor/acceptor is Glu-129. The tract at residues 161 to 190 is disordered; that stretch reads PYGSSGVGSKYQGQRGPTPSRSYQNFIRST. Polar residues predominate over residues 171 to 190; the sequence is YQGQRGPTPSRSYQNFIRST.

This sequence belongs to the dCTP deaminase family. In terms of assembly, homotrimer.

It catalyses the reaction dCTP + 2 H2O = dUMP + NH4(+) + diphosphate. The protein operates within pyrimidine metabolism; dUMP biosynthesis; dUMP from dCTP: step 1/1. Bifunctional enzyme that catalyzes both the deamination of dCTP to dUTP and the hydrolysis of dUTP to dUMP without releasing the toxic dUTP intermediate. In Mycobacterium ulcerans (strain Agy99), this protein is dCTP deaminase, dUMP-forming.